The following is a 215-amino-acid chain: Oligoribonuclease (215 aa).

The Exonuclease domain maps to 5-170; it reads LVWIDCEMTG…ADIHESIREL (166 aa). The active site involves Y127. The interval 196-215 is disordered; sequence LSDGAGAQEETDSAEAPQSG.

The protein belongs to the oligoribonuclease family.

It is found in the cytoplasm. 3'-to-5' exoribonuclease specific for small oligoribonucleotides. This is Oligoribonuclease from Mycobacterium bovis (strain BCG / Pasteur 1173P2).